A 200-amino-acid polypeptide reads, in one-letter code: Vacuolar iron transporter homolog 3 (200 aa).

Residues 1–31 (MESHNTLNLDMEKDQEKAFDYSKRAQWLRAA) are Cytoplasmic-facing. A helical membrane pass occupies residues 32-52 (VLGANDGLVSTASLMMGVGAV). Residues 53–59 (KQNVKIM) lie on the Vacuolar side of the membrane. A helical transmembrane segment spans residues 60-80 (ILTGFAGLVAGACSMAIGEFV). Over 81–113 (SVYSQYDIEVAQMKRETGGEIEKEKLPSPTQAA) the chain is Cytoplasmic. A helical transmembrane segment spans residues 114–134 (AASALAFSLGAMVPLLAAAFV). At 135-140 (KEYKVR) the chain is on the vacuolar side. Residues 141–161 (IGAIVAAVTLALVMFGWLGAV) traverse the membrane as a helical segment. The Cytoplasmic portion of the chain corresponds to 162 to 173 (LGKAPVVKSSLR). The chain crosses the membrane as a helical span at residues 174–194 (VLVGGWLAMAITYGFTKLIGS). The Vacuolar segment spans residues 195–200 (HSHMYV).

The protein belongs to the CCC1 family.

The protein resides in the vacuole membrane. It carries out the reaction Fe(2+)(in) = Fe(2+)(out). In terms of biological role, probable vacuolar iron transporter that may be involved in the regulation of iron distribution throughout the plant. This chain is Vacuolar iron transporter homolog 3, found in Arabidopsis thaliana (Mouse-ear cress).